Reading from the N-terminus, the 536-residue chain is CTP synthase (536 aa).

Residues 1-268 are amidoligase domain; that stretch reads MSTKYVFVTG…DNLVCEKLHL (268 aa). Ser14 lines the CTP pocket. Ser14 provides a ligand contact to UTP. 15-20 contacts ATP; that stretch reads ALGKGI. L-glutamine is bound at residue Tyr55. Asp72 contacts ATP. Mg(2+)-binding residues include Asp72 and Glu142. Residues 149 to 151, 189 to 194, and Lys225 contribute to the CTP site; these read DIE and KTKPTQ. UTP-binding positions include 189-194 and Lys225; that span reads KTKPTQ. The 243-residue stretch at 293–535 folds into the Glutamine amidotransferase type-1 domain; that stretch reads KIALVGKYVE…IKAALEENKS (243 aa). Residue Gly355 participates in L-glutamine binding. Cys382 functions as the Nucleophile; for glutamine hydrolysis in the catalytic mechanism. Residues 383-386, Glu406, and Arg463 contribute to the L-glutamine site; that span reads LGMQ. Residues His508 and Glu510 contribute to the active site.

The protein belongs to the CTP synthase family. In terms of assembly, homotetramer.

It catalyses the reaction UTP + L-glutamine + ATP + H2O = CTP + L-glutamate + ADP + phosphate + 2 H(+). It carries out the reaction L-glutamine + H2O = L-glutamate + NH4(+). The enzyme catalyses UTP + NH4(+) + ATP = CTP + ADP + phosphate + 2 H(+). The protein operates within pyrimidine metabolism; CTP biosynthesis via de novo pathway; CTP from UDP: step 2/2. Its activity is regulated as follows. Allosterically activated by GTP, when glutamine is the substrate; GTP has no effect on the reaction when ammonia is the substrate. The allosteric effector GTP functions by stabilizing the protein conformation that binds the tetrahedral intermediate(s) formed during glutamine hydrolysis. Inhibited by the product CTP, via allosteric rather than competitive inhibition. Its function is as follows. Catalyzes the ATP-dependent amination of UTP to CTP with either L-glutamine or ammonia as the source of nitrogen. Regulates intracellular CTP levels through interactions with the four ribonucleotide triphosphates. The protein is CTP synthase of Clostridium beijerinckii (strain ATCC 51743 / NCIMB 8052) (Clostridium acetobutylicum).